We begin with the raw amino-acid sequence, 156 residues long: Small ribosomal subunit protein uS7 (156 aa).

It belongs to the universal ribosomal protein uS7 family. As to quaternary structure, part of the 30S ribosomal subunit. Contacts proteins S9 and S11.

Functionally, one of the primary rRNA binding proteins, it binds directly to 16S rRNA where it nucleates assembly of the head domain of the 30S subunit. Is located at the subunit interface close to the decoding center, probably blocks exit of the E-site tRNA. This Nitrobacter winogradskyi (strain ATCC 25391 / DSM 10237 / CIP 104748 / NCIMB 11846 / Nb-255) protein is Small ribosomal subunit protein uS7.